We begin with the raw amino-acid sequence, 226 residues long: Holliday junction branch migration complex subunit RuvA (226 aa).

Residues 1-67 form a domain I region; the sequence is MITSVYAKIE…AINKELYAFK (67 aa). A domain II region spans residues 68 to 145; sequence SLKEKEWFKA…YLKNQIVVSD (78 aa). The flexible linker stretch occupies residues 146–167; sequence KVEPQIDDDEKIDDSKDLNDDE. The domain III stretch occupies residues 168-226; it reads LLSEIVIEAIDCLISLGYKQEQIKTALAEIDLKNESINDSADLVAVIIKQIGLRTSEVS.

The protein belongs to the RuvA family. In terms of assembly, homotetramer. Forms an RuvA(8)-RuvB(12)-Holliday junction (HJ) complex. HJ DNA is sandwiched between 2 RuvA tetramers; dsDNA enters through RuvA and exits via RuvB. An RuvB hexamer assembles on each DNA strand where it exits the tetramer. Each RuvB hexamer is contacted by two RuvA subunits (via domain III) on 2 adjacent RuvB subunits; this complex drives branch migration. In the full resolvosome a probable DNA-RuvA(4)-RuvB(12)-RuvC(2) complex forms which resolves the HJ.

The protein resides in the cytoplasm. Its function is as follows. The RuvA-RuvB-RuvC complex processes Holliday junction (HJ) DNA during genetic recombination and DNA repair, while the RuvA-RuvB complex plays an important role in the rescue of blocked DNA replication forks via replication fork reversal (RFR). RuvA specifically binds to HJ cruciform DNA, conferring on it an open structure. The RuvB hexamer acts as an ATP-dependent pump, pulling dsDNA into and through the RuvAB complex. HJ branch migration allows RuvC to scan DNA until it finds its consensus sequence, where it cleaves and resolves the cruciform DNA. This is Holliday junction branch migration complex subunit RuvA from Mycoplasmoides gallisepticum (strain R(low / passage 15 / clone 2)) (Mycoplasma gallisepticum).